Reading from the N-terminus, the 173-residue chain is Large ribosomal subunit protein uL10 (173 aa).

The protein belongs to the universal ribosomal protein uL10 family. In terms of assembly, part of the ribosomal stalk of the 50S ribosomal subunit. The N-terminus interacts with L11 and the large rRNA to form the base of the stalk. The C-terminus forms an elongated spine to which L12 dimers bind in a sequential fashion forming a multimeric L10(L12)X complex.

Its function is as follows. Forms part of the ribosomal stalk, playing a central role in the interaction of the ribosome with GTP-bound translation factors. This chain is Large ribosomal subunit protein uL10, found in Micrococcus luteus (strain ATCC 4698 / DSM 20030 / JCM 1464 / CCM 169 / CCUG 5858 / IAM 1056 / NBRC 3333 / NCIMB 9278 / NCTC 2665 / VKM Ac-2230) (Micrococcus lysodeikticus).